A 421-amino-acid polypeptide reads, in one-letter code: Solute carrier family 35 member F3 (421 aa).

Residues 25 to 45 form a disordered region; the sequence is EGEERPRDSPGPAEAQAPAGV. 10 helical membrane-spanning segments follow: residues 66-86, 98-118, 149-169, 179-199, 208-228, 232-252, 266-286, 305-325, 326-346, and 352-372; these read IFWG…STQL, FTLT…YYVG, VFFT…YLYL, DVSV…WIVL, IVAA…DGFH, VIGI…KVLF, LFLS…PIIL, LCGF…GIAV, TYPT…AVID, and IVFN…FLLL. The segment at 393–421 is disordered; it reads KKEEPAEGAADLSSGPQSKNRRARPSFAR. Positions 411 to 421 are enriched in basic residues; it reads KNRRARPSFAR.

The protein belongs to the SLC35F solute transporter family. As to expression, expressed at the highest levels in the adult cerebellum.

The protein resides in the membrane. It catalyses the reaction thiamine(in) = thiamine(out). In terms of biological role, mediates thiamine transport. The polypeptide is Solute carrier family 35 member F3 (Homo sapiens (Human)).